The primary structure comprises 201 residues: UPF0376 protein F10G2.1 (201 aa).

The Cytoplasmic portion of the chain corresponds to 1 to 3 (MKH). A helical; Signal-anchor for type II membrane protein membrane pass occupies residues 4-24 (FLLLAIIGILFLGSTYGASVA). Over 25-201 (TEKLKASNCT…LLECDFRNIQ (177 aa)) the chain is Extracellular. N-linked (GlcNAc...) asparagine glycosylation is found at Asn32 and Asn124.

It belongs to the UPF0376 family.

The protein localises to the membrane. In Caenorhabditis elegans, this protein is UPF0376 protein F10G2.1.